The sequence spans 255 residues: Indole-3-glycerol phosphate synthase (255 aa).

It belongs to the TrpC family.

The catalysed reaction is 1-(2-carboxyphenylamino)-1-deoxy-D-ribulose 5-phosphate + H(+) = (1S,2R)-1-C-(indol-3-yl)glycerol 3-phosphate + CO2 + H2O. It functions in the pathway amino-acid biosynthesis; L-tryptophan biosynthesis; L-tryptophan from chorismate: step 4/5. This Streptococcus sanguinis (strain SK36) protein is Indole-3-glycerol phosphate synthase.